We begin with the raw amino-acid sequence, 415 residues long: von Willebrand factor A domain-containing protein 1 (415 aa).

An N-terminal signal peptide occupies residues 1–18 (MLFWTVLSMALSLRLALA). One can recognise a VWFA domain in the interval 34-213 (DLLFLLDSSA…ELRGAIIDAM (180 aa)). Phosphoserine occurs at positions 74, 80, and 93. 2 consecutive Fibronectin type-III domains span residues 214–305 (QPHQ…LQEE) and 307–405 (GPER…VPQA). A glycan (N-linked (GlcNAc...) asparagine) is linked at asparagine 264. A disulfide bridge links cysteine 369 with cysteine 393.

Homodimer or homomultimer; disulfide-linked. Interacts with HSPG2. In terms of processing, N-glycosylated.

The protein resides in the secreted. It localises to the extracellular space. Its subcellular location is the extracellular matrix. It is found in the basement membrane. In terms of biological role, promotes matrix assembly. Involved in the organization of skeletal muscles and in the formation of neuromuscular junctions. This Rattus norvegicus (Rat) protein is von Willebrand factor A domain-containing protein 1 (Vwa1).